The chain runs to 429 residues: Enolase (429 aa).

Gln164 is a (2R)-2-phosphoglycerate binding site. Glu206 (proton donor) is an active-site residue. The Mg(2+) site is built by Asp243, Glu286, and Asp313. 4 residues coordinate (2R)-2-phosphoglycerate: Lys338, Arg367, Ser368, and Lys389. Catalysis depends on Lys338, which acts as the Proton acceptor.

The protein belongs to the enolase family. Mg(2+) serves as cofactor.

The protein localises to the cytoplasm. Its subcellular location is the secreted. It is found in the cell surface. It catalyses the reaction (2R)-2-phosphoglycerate = phosphoenolpyruvate + H2O. The protein operates within carbohydrate degradation; glycolysis; pyruvate from D-glyceraldehyde 3-phosphate: step 4/5. Catalyzes the reversible conversion of 2-phosphoglycerate (2-PG) into phosphoenolpyruvate (PEP). It is essential for the degradation of carbohydrates via glycolysis. This is Enolase from Thermosipho africanus (strain TCF52B).